The chain runs to 199 residues: 5'-deoxynucleotidase CKO_00504 (199 aa).

Residues 18–19 (RW) and histidine 33 contribute to the substrate site. The region spanning 30 to 142 (VSEHSLQVAM…VKQADALCAY (113 aa)) is the HD domain. Residues histidine 33, histidine 68, and aspartate 69 each coordinate a divalent metal cation. Residues aspartate 69, 77–80 (DLPT), and aspartate 137 each bind substrate. Aspartate 137 serves as a coordination point for a divalent metal cation.

The protein belongs to the 5DNU family. Homodimer. The cofactor is a divalent metal cation.

The protein resides in the cytoplasm. It catalyses the reaction a 2'-deoxyribonucleoside 5'-phosphate + H2O = a 2'-deoxyribonucleoside + phosphate. Functionally, catalyzes the strictly specific dephosphorylation of 2'-deoxyribonucleoside 5'-monophosphates. This chain is 5'-deoxynucleotidase CKO_00504, found in Citrobacter koseri (strain ATCC BAA-895 / CDC 4225-83 / SGSC4696).